We begin with the raw amino-acid sequence, 227 residues long: 2,3-bisphosphoglycerate-dependent phosphoglycerate mutase (227 aa).

Substrate is bound by residues 8–15 (RHGQSIWN), 21–22 (TG), R58, 110–113 (ERYY), K121, 137–138 (RR), and 181–182 (GN). The active-site Tele-phosphohistidine intermediate is the H9. Residue E110 is the Proton donor/acceptor of the active site.

It belongs to the phosphoglycerate mutase family. BPG-dependent PGAM subfamily. In terms of assembly, homodimer.

It carries out the reaction (2R)-2-phosphoglycerate = (2R)-3-phosphoglycerate. It functions in the pathway carbohydrate degradation; glycolysis; pyruvate from D-glyceraldehyde 3-phosphate: step 3/5. Functionally, catalyzes the interconversion of 2-phosphoglycerate and 3-phosphoglycerate. In Pseudoalteromonas atlantica (strain T6c / ATCC BAA-1087), this protein is 2,3-bisphosphoglycerate-dependent phosphoglycerate mutase.